The primary structure comprises 335 residues: MKSTSKIYTDKDSNLDVIKGKRIAVLGYGSQGRAWAQNLRDSGLNVVVGLEREGKSWELAKSDGIIPLHTKDAVKDADIIVFLVPDMVQRTLWLESVQPYMKKGADLVFAHGFNIHYKLIEPPKDSDVYMIAPKGPGPTVREYYKAGGGVPALVAIQQDVSGTALQKALAIAKGIGATRAGVIPTTFKEETETDLFGEQVILVGGIMELMKAAFETLVEEGYQPEVAYFETINELKMLVDLVYEKGITGMLKAVSDTAKYGGMTVGKFVINEDVRKRMKEALQRIKSGKFAEEWVEEYGRGMPTVVNGLSQVQNSLEEKIGNQLKDLIQKGKPKS.

Residues Ser5–Thr185 form the KARI N-terminal Rossmann domain. NADP(+) is bound by residues Tyr28–Gln31, Ser56, and Asp86–Gln89. The active site involves His111. Position 137 (Gly137) interacts with NADP(+). Residues Thr186 to Gly331 enclose the KARI C-terminal knotted domain. 4 residues coordinate Mg(2+): Asp194, Glu198, Glu230, and Glu234. Position 255 (Ser255) interacts with substrate.

Belongs to the ketol-acid reductoisomerase family. Mg(2+) serves as cofactor.

It catalyses the reaction (2R)-2,3-dihydroxy-3-methylbutanoate + NADP(+) = (2S)-2-acetolactate + NADPH + H(+). The enzyme catalyses (2R,3R)-2,3-dihydroxy-3-methylpentanoate + NADP(+) = (S)-2-ethyl-2-hydroxy-3-oxobutanoate + NADPH + H(+). It participates in amino-acid biosynthesis; L-isoleucine biosynthesis; L-isoleucine from 2-oxobutanoate: step 2/4. Its pathway is amino-acid biosynthesis; L-valine biosynthesis; L-valine from pyruvate: step 2/4. In terms of biological role, involved in the biosynthesis of branched-chain amino acids (BCAA). Catalyzes an alkyl-migration followed by a ketol-acid reduction of (S)-2-acetolactate (S2AL) to yield (R)-2,3-dihydroxy-isovalerate. In the isomerase reaction, S2AL is rearranged via a Mg-dependent methyl migration to produce 3-hydroxy-3-methyl-2-ketobutyrate (HMKB). In the reductase reaction, this 2-ketoacid undergoes a metal-dependent reduction by NADPH to yield (R)-2,3-dihydroxy-isovalerate. The chain is Ketol-acid reductoisomerase (NADP(+)) from Saccharolobus islandicus (strain Y.G.57.14 / Yellowstone #1) (Sulfolobus islandicus).